The primary structure comprises 96 residues: Glutamyl-tRNA(Gln) amidotransferase subunit C (96 aa).

The protein belongs to the GatC family. In terms of assembly, heterotrimer of A, B and C subunits.

The enzyme catalyses L-glutamyl-tRNA(Gln) + L-glutamine + ATP + H2O = L-glutaminyl-tRNA(Gln) + L-glutamate + ADP + phosphate + H(+). It catalyses the reaction L-aspartyl-tRNA(Asn) + L-glutamine + ATP + H2O = L-asparaginyl-tRNA(Asn) + L-glutamate + ADP + phosphate + 2 H(+). Functionally, allows the formation of correctly charged Asn-tRNA(Asn) or Gln-tRNA(Gln) through the transamidation of misacylated Asp-tRNA(Asn) or Glu-tRNA(Gln) in organisms which lack either or both of asparaginyl-tRNA or glutaminyl-tRNA synthetases. The reaction takes place in the presence of glutamine and ATP through an activated phospho-Asp-tRNA(Asn) or phospho-Glu-tRNA(Gln). In Halalkalibacterium halodurans (strain ATCC BAA-125 / DSM 18197 / FERM 7344 / JCM 9153 / C-125) (Bacillus halodurans), this protein is Glutamyl-tRNA(Gln) amidotransferase subunit C.